Here is a 138-residue protein sequence, read N- to C-terminus: Large ribosomal subunit protein uL16 (138 aa).

This sequence belongs to the universal ribosomal protein uL16 family. As to quaternary structure, part of the 50S ribosomal subunit.

In terms of biological role, binds 23S rRNA and is also seen to make contacts with the A and possibly P site tRNAs. This Anaeromyxobacter dehalogenans (strain 2CP-C) protein is Large ribosomal subunit protein uL16.